The primary structure comprises 591 residues: V-type ATP synthase alpha chain (591 aa).

231 to 238 provides a ligand contact to ATP; the sequence is GPFGSGKT.

Belongs to the ATPase alpha/beta chains family.

The catalysed reaction is ATP + H2O + 4 H(+)(in) = ADP + phosphate + 5 H(+)(out). Its function is as follows. Produces ATP from ADP in the presence of a proton gradient across the membrane. The V-type alpha chain is a catalytic subunit. This chain is V-type ATP synthase alpha chain, found in Clostridium novyi (strain NT).